A 378-amino-acid polypeptide reads, in one-letter code: Protein KlaB (378 aa).

Belongs to the TelA family.

Its function is as follows. Belongs to the kla operon, which is associated with cryptic tellurite resistance, and IncW plasmid fertility inhibition. This chain is Protein KlaB (klaB), found in Escherichia coli.